We begin with the raw amino-acid sequence, 118 residues long: Putative pterin-4-alpha-carbinolamine dehydratase (118 aa).

It belongs to the pterin-4-alpha-carbinolamine dehydratase family.

The enzyme catalyses (4aS,6R)-4a-hydroxy-L-erythro-5,6,7,8-tetrahydrobiopterin = (6R)-L-erythro-6,7-dihydrobiopterin + H2O. This Pseudomonas fluorescens (strain SBW25) protein is Putative pterin-4-alpha-carbinolamine dehydratase.